Reading from the N-terminus, the 331-residue chain is Aspartate carbamoyltransferase catalytic subunit (331 aa).

2 residues coordinate carbamoyl phosphate: arginine 62 and threonine 63. Lysine 90 provides a ligand contact to L-aspartate. Residues arginine 112, histidine 145, and glutamine 148 each coordinate carbamoyl phosphate. 2 residues coordinate L-aspartate: arginine 185 and arginine 246. Carbamoyl phosphate is bound by residues glycine 287 and proline 288.

The protein belongs to the aspartate/ornithine carbamoyltransferase superfamily. ATCase family. In terms of assembly, heterododecamer (2C3:3R2) of six catalytic PyrB chains organized as two trimers (C3), and six regulatory PyrI chains organized as three dimers (R2).

The catalysed reaction is carbamoyl phosphate + L-aspartate = N-carbamoyl-L-aspartate + phosphate + H(+). Its pathway is pyrimidine metabolism; UMP biosynthesis via de novo pathway; (S)-dihydroorotate from bicarbonate: step 2/3. Catalyzes the condensation of carbamoyl phosphate and aspartate to form carbamoyl aspartate and inorganic phosphate, the committed step in the de novo pyrimidine nucleotide biosynthesis pathway. This Synechocystis sp. (strain ATCC 27184 / PCC 6803 / Kazusa) protein is Aspartate carbamoyltransferase catalytic subunit.